The primary structure comprises 180 residues: Interleukin-1-binding protein (180 aa).

The first 20 residues, methionine 1–threonine 20, serve as a signal peptide directing secretion. N-linked (GlcNAc...) asparagine; by host glycans are attached at residues asparagine 80, asparagine 103, and asparagine 113.

It belongs to the interleukin-1 receptor family. Interacts with mouse Il1b.

It localises to the secreted. May reduce the host inflammatory response by interacting with inteleukin-1 beta (Il1b) and thus decreasing the association between IL1B and its cellular receptor. The polypeptide is Interleukin-1-binding protein (OPG201) (Monkeypox virus).